The sequence spans 221 residues: Ribonuclease T (221 aa).

The Exonuclease domain maps to 21-195 (VVIDIESAGF…YDTIQTAYLF (175 aa)). The Mg(2+) site is built by Asp24, Glu26, His182, and Asp187. His182 acts as the Proton donor/acceptor in catalysis.

Belongs to the RNase T family. As to quaternary structure, homodimer. The cofactor is Mg(2+).

Trims short 3' overhangs of a variety of RNA species, leaving a one or two nucleotide 3' overhang. Responsible for the end-turnover of tRNA: specifically removes the terminal AMP residue from uncharged tRNA (tRNA-C-C-A). Also appears to be involved in tRNA biosynthesis. This is Ribonuclease T from Buchnera aphidicola subsp. Cinara cedri (strain Cc).